Consider the following 101-residue polypeptide: Urease subunit beta (101 aa).

It belongs to the urease beta subunit family. Heterotrimer of UreA (gamma), UreB (beta) and UreC (alpha) subunits. Three heterotrimers associate to form the active enzyme.

It localises to the cytoplasm. The enzyme catalyses urea + 2 H2O + H(+) = hydrogencarbonate + 2 NH4(+). It functions in the pathway nitrogen metabolism; urea degradation; CO(2) and NH(3) from urea (urease route): step 1/1. The protein is Urease subunit beta of Stutzerimonas stutzeri (strain A1501) (Pseudomonas stutzeri).